The chain runs to 174 residues: MSLNRQEKAVVIEEVSAAVAKAQSIVIAEYRGLDVASVTVLRKTARESGVYLRVLKNTLARRAVAGTAFEPLSEQLTGPLIYGISEDPVSAAKVLAGFAKSNDKLVIKAGSLPNNLLNQEGVKALATMPSREELLSKLLGTMQAPIAQFVRTLNEVPTKFARGLAAVRDQKAAA.

The protein belongs to the universal ribosomal protein uL10 family. Part of the ribosomal stalk of the 50S ribosomal subunit. The N-terminus interacts with L11 and the large rRNA to form the base of the stalk. The C-terminus forms an elongated spine to which L12 dimers bind in a sequential fashion forming a multimeric L10(L12)X complex.

Functionally, forms part of the ribosomal stalk, playing a central role in the interaction of the ribosome with GTP-bound translation factors. The chain is Large ribosomal subunit protein uL10 from Bordetella petrii (strain ATCC BAA-461 / DSM 12804 / CCUG 43448).